A 335-amino-acid chain; its full sequence is Glyceraldehyde-3-phosphate dehydrogenase (335 aa).

Residues R10–I11, D33, K77, and T119 each bind NAD(+). D-glyceraldehyde 3-phosphate contacts are provided by residues S150–T152, T181, T210–G211, and R233. C151 (nucleophile) is an active-site residue. N315 lines the NAD(+) pocket.

It belongs to the glyceraldehyde-3-phosphate dehydrogenase family. Homotetramer.

Its subcellular location is the cytoplasm. The enzyme catalyses D-glyceraldehyde 3-phosphate + phosphate + NAD(+) = (2R)-3-phospho-glyceroyl phosphate + NADH + H(+). It functions in the pathway carbohydrate degradation; glycolysis; pyruvate from D-glyceraldehyde 3-phosphate: step 1/5. Its function is as follows. Catalyzes the oxidative phosphorylation of glyceraldehyde 3-phosphate (G3P) to 1,3-bisphosphoglycerate (BPG) using the cofactor NAD. The first reaction step involves the formation of a hemiacetal intermediate between G3P and a cysteine residue, and this hemiacetal intermediate is then oxidized to a thioester, with concomitant reduction of NAD to NADH. The reduced NADH is then exchanged with the second NAD, and the thioester is attacked by a nucleophilic inorganic phosphate to produce BPG. This is Glyceraldehyde-3-phosphate dehydrogenase (gap) from Chlamydia muridarum (strain MoPn / Nigg).